Consider the following 364-residue polypeptide: MKDNSSWSCSCSWSSWKICLLSVLFLTETITAVKLPPKLIIPAVIAFGDSIVDTGMNNNVKTVVKCDFLPYGINFQSGVATGRFCDGRVPADLLAEELGIKSIVPAYLDPNLKSKDLLTGVSFASGGSGYDPITPKLVAVISLEDQLSYFEEYIEKVKNIVGEARKDFIVANSLFLLVAGSDDIANTYYTLRARPEYDVDSYTTLMSDSASEFVTKLYGYGVRRVAVFGAPPIGCVPSQRTLGGGILRDCADNYNEAAKLFNSKLSPKLDSLRKTLPGIKPIYINIYDPLFDIIQNPANYGFEVSNKGCCGTGAIEVAVLCNKITSSVCPDVSTHVFWDSYHPTEKTYKVLVSLLINKFVNQFV.

Positions 1–32 are cleaved as a signal peptide; the sequence is MKDNSSWSCSCSWSSWKICLLSVLFLTETITA. Ser-50 acts as the Nucleophile in catalysis. Residues Asp-339 and His-342 contribute to the active site.

Belongs to the 'GDSL' lipolytic enzyme family. In terms of tissue distribution, flower buds.

Its subcellular location is the secreted. The polypeptide is GDSL esterase/lipase EXL3 (EXL3) (Arabidopsis thaliana (Mouse-ear cress)).